The chain runs to 194 residues: Protein GrpE (194 aa).

A disordered region spans residues 1–53 (MVENEKTSVEETEEKAETEDEMLTEDPSNEDSDEANEEGNELSEEEKRIAELE). Residues 10–44 (EETEEKAETEDEMLTEDPSNEDSDEANEEGNELSE) show a composition bias toward acidic residues.

Belongs to the GrpE family. As to quaternary structure, homodimer.

It localises to the cytoplasm. In terms of biological role, participates actively in the response to hyperosmotic and heat shock by preventing the aggregation of stress-denatured proteins, in association with DnaK and GrpE. It is the nucleotide exchange factor for DnaK and may function as a thermosensor. Unfolded proteins bind initially to DnaJ; upon interaction with the DnaJ-bound protein, DnaK hydrolyzes its bound ATP, resulting in the formation of a stable complex. GrpE releases ADP from DnaK; ATP binding to DnaK triggers the release of the substrate protein, thus completing the reaction cycle. Several rounds of ATP-dependent interactions between DnaJ, DnaK and GrpE are required for fully efficient folding. The polypeptide is Protein GrpE (Halalkalibacterium halodurans (strain ATCC BAA-125 / DSM 18197 / FERM 7344 / JCM 9153 / C-125) (Bacillus halodurans)).